We begin with the raw amino-acid sequence, 887 residues long: Putative RNA-binding protein 15B (887 aa).

The disordered stretch occupies residues 1–132 (MKRQSERDSS…EPAGPGSTAA (132 aa)). Low complexity predominate over residues 10 to 20 (SPSGRGSSSSA). Basic and acidic residues-rich tracts occupy residues 22-34 (RPRE…EAGG) and 65-77 (GHRD…DANH). A compositionally biased stretch (gly residues) spans 83–94 (RSSGAPGGGGRT). Positions 95–110 (GKASGDPGAGGASPRA) are enriched in low complexity. Phosphoserine is present on residues Ser-107 and Ser-111. The span at 111–122 (SPLPPPPPPPGA) shows a compositional bias: pro residues. The segment covering 123–132 (EPAGPGSTAA) has biased composition (low complexity). The RRM 1 domain maps to 136–216 (KTLLISSLSP…RPLKVEPVYL (81 aa)). Lys-210 is covalently cross-linked (Glycyl lysine isopeptide (Lys-Gly) (interchain with G-Cter in SUMO2)). The segment at 215 to 249 (YLRGGGSSRRSSSSSAAASTPPPGPPAPADPLGYL) is disordered. The segment covering 222–233 (SRRSSSSSAAAS) has biased composition (low complexity). A compositionally biased stretch (pro residues) spans 234 to 243 (TPPPGPPAPA). 2 positions are modified to phosphoserine: Ser-261 and Ser-263. 2 consecutive RRM domains span residues 333–410 (RNLF…YGKA) and 414–488 (TRLW…FAKA). Phosphothreonine is present on Thr-529. 3 positions are modified to phosphoserine: Ser-549, Ser-553, and Ser-559. Residues 549–703 (SLSKSSDRRN…TLEEPKHETK (155 aa)) form a disordered region. Composition is skewed to basic and acidic residues over residues 570-613 (RSGE…ERSR), 623-643 (RGSD…EGTK), and 668-700 (EAPD…EPKH). Residues 590 to 594 (RRKRR) carry the Nuclear localization signal motif. Residue Lys-699 forms a Glycyl lysine isopeptide (Lys-Gly) (interchain with G-Cter in SUMO2) linkage. An SPOC domain is found at 708–886 (LSEYAQTLQL…HMVIVIVRDT (179 aa)). The segment at 719 to 887 (WNGLLVLKNS…MVIVIVRDTA (169 aa)) is interaction with Epstein-Barr virus BMLF1.

It belongs to the RRM Spen family. Component of the WMM complex, a N6-methyltransferase complex composed of a catalytic subcomplex, named MAC, and of an associated subcomplex, named MACOM. The MAC subcomplex is composed of METTL3 and METTL14. The MACOM subcomplex is composed of WTAP, ZC3H13, CBLL1/HAKAI, VIRMA, and, in some cases of RBM15 (RBM15 or RBM15B). May interact with NCOR2. Interacts with NXF1, the interaction is required to promote mRNA export.

It localises to the nucleus. The protein resides in the nucleoplasm. Its subcellular location is the nucleus speckle. The protein localises to the nucleus envelope. Its function is as follows. RNA-binding protein that acts as a key regulator of N6-methyladenosine (m6A) methylation of RNAs, thereby regulating different processes, such as alternative splicing of mRNAs and X chromosome inactivation mediated by Xist RNA. Associated component of the WMM complex, a complex that mediates N6-methyladenosine (m6A) methylation of RNAs, a modification that plays a role in the efficiency of mRNA splicing and RNA processing. Plays a key role in m6A methylation, possibly by binding target RNAs and recruiting the WMM complex. Involved in random X inactivation mediated by Xist RNA: acts by binding Xist RNA and recruiting the WMM complex, which mediates m6A methylation, leading to target YTHDC1 reader on Xist RNA and promoting transcription repression activity of Xist. Functions in the regulation of alternative or illicit splicing, possibly by regulating m6A methylation. Inhibits pre-mRNA splicing. Also functions as a mRNA export factor by acting as a cofactor for the nuclear export receptor NXF1. This chain is Putative RNA-binding protein 15B (Rbm15b), found in Mus musculus (Mouse).